Here is a 375-residue protein sequence, read N- to C-terminus: DNA replication and repair protein RecF (375 aa).

30-37 contributes to the ATP binding site; the sequence is GENAQGKT.

It belongs to the RecF family.

The protein resides in the cytoplasm. Functionally, the RecF protein is involved in DNA metabolism; it is required for DNA replication and normal SOS inducibility. RecF binds preferentially to single-stranded, linear DNA. It also seems to bind ATP. In Bacillus cereus (strain ZK / E33L), this protein is DNA replication and repair protein RecF.